The primary structure comprises 580 residues: High affinity choline transporter 1 (580 aa).

Residues 1–6 (MPFHVE) are Extracellular-facing. The chain crosses the membrane as a helical span at residues 7 to 27 (GLVAIILFYLLIFLVGIWAAW). At 28–48 (KTKNSGNAEERSEAIIVGGRD) the chain is on the cytoplasmic side. The chain crosses the membrane as a helical span at residues 49–69 (IGLLVGGFTMTATWVGGGYIN). Residues 70–81 (GTAEAVYGPGCG) are Extracellular-facing. The chain crosses the membrane as a helical span at residues 82 to 102 (LAWAQAPIGYSLSLILGGLFF). Over 103–125 (AKPMRSKGYVTMLDPFQQIYGKR) the chain is Cytoplasmic. The helical transmembrane segment at 126–146 (MGGLLFIPALMGEMFWAAAIF) threads the bilayer. Residues 147-164 (SALGATISVIIDVDVNIS) lie on the Extracellular side of the membrane. A helical membrane pass occupies residues 165–185 (VIVSALIAILYTLVGGLYSVA). Topologically, residues 186 to 191 (YTDVVQ) are cytoplasmic. A helical transmembrane segment spans residues 192–212 (LFCIFIGLWISVPFALSHPAV). Over 213-237 (TDIGFTAVHAKYQSPWLGTIESVEV) the chain is Extracellular. The helical transmembrane segment at 238–258 (YTWLDNFLLLMLGGIPWQAYF) threads the bilayer. The Cytoplasmic portion of the chain corresponds to 259–274 (QRVLSSSSATYAQVLS). The helical transmembrane segment at 275-295 (FLAAFGCLVMALPAICIGAIG) threads the bilayer. The Extracellular portion of the chain corresponds to 296 to 317 (ASTDWNQTAYGFPDPKTKEEAD). The N-linked (GlcNAc...) asparagine glycan is linked to Asn301. Residues 318–338 (MILPIVLQYLCPVYISFFGLG) traverse the membrane as a helical segment. The Cytoplasmic segment spans residues 339-376 (AVSAAVMSSADSSILSASSMFARNIYQLSFRQNASDKE). The helical transmembrane segment at 377-397 (IVWVMRITVFVFGASATAMAL) threads the bilayer. The Extracellular portion of the chain corresponds to 398–406 (LTKTVYGLW). A helical transmembrane segment spans residues 407–427 (YLSSDLVYIIIFPQLLCVLFI). Residues 428 to 435 (KGTNTYGA) are Cytoplasmic-facing. Residues 436-456 (VAGYIFGLFLRITGGEPYLYL) traverse the membrane as a helical segment. Topologically, residues 457 to 481 (QPLIFYPGYYPDKNGIYNQRFPFKT) are extracellular. The chain crosses the membrane as a helical span at residues 482 to 502 (LSMVTSFFTNICVSYLAKYLF). The mediates interaction with SEC14L1 stretch occupies residues 502–580 (FESGTLPPKL…EGSGTEDNLQ (79 aa)). Residues 503 to 580 (ESGTLPPKLD…EGSGTEDNLQ (78 aa)) are Cytoplasmic-facing. The Dileucine-like motif motif lies at 527 to 532 (DKTILV).

The protein belongs to the sodium:solute symporter (SSF) (TC 2.A.21) family. As to quaternary structure, homooligomerizes at cell surface. Interacts with SEC14L1; may regulate SLC5A7. Post-translationally, phosphorylated. As to expression, expressed in basal forebrain, brain stem, spinal chord, and striatum. Specific for cholinergic neurons.

The protein localises to the presynaptic cell membrane. The protein resides in the cell projection. It localises to the axon. It is found in the early endosome membrane. Its subcellular location is the cytoplasmic vesicle. The protein localises to the secretory vesicle. The protein resides in the synaptic vesicle membrane. It carries out the reaction choline(out) + n Na(+)(out) = choline(in) + n Na(+)(in). Its activity is regulated as follows. Choline uptake activity is regulated by SLC5A7/CHT1 internalization (inactive form) from the cell surface and recycling of internalized SLC5A7/CHT1 into the cell surface (active form). Activated by extracellular chloride ion. Specifically inhibited by nanomolar concentrations of hemicholinium 3. Its function is as follows. High-affinity Na(+)-coupled choline transmembrane symporter. Functions as an electrogenic, voltage-dependent transporter with variable charge/choline stoichiometry. Choline uptake and choline-induced current is also Cl(-)-dependent where Cl(-) is likely a regulatory ion rather than cotransported ion. Plays a critical role in acetylcholine (ACh) synthesis by taking up the substrate choline from the synaptic cleft into the presynaptic nerve terminals after neurotransmitter release. SLC5A7/CHT1-mediated choline high-affinity transport in cholinergic neurons is the rate-limiting step for production of ACh, thereby facilitating communication by subsequent action potentials. Localized predominantly in presynaptic terminal intracellular organelles, and translocated to the plasma membrane in active form in response to neuronal activity. This chain is High affinity choline transporter 1, found in Rattus norvegicus (Rat).